The following is a 466-amino-acid chain: Putative chitinase 2 (466 aa).

Positions 1–17 (MYLTIWLVPLLAVGTWG) are cleaved as a signal peptide. One can recognise a GH18 domain in the interval 20-380 (FNRFCHYNSW…MAVIHGLNAY (361 aa)). C24 and C49 are disulfide-bonded. E141 acts as the Proton donor in catalysis. A coiled-coil region spans residues 395–447 (YNKKILRARVSLRNYRRRNQQGKVAEMEQRIRNLEQELQQSMGNMAYERQQAQ).

The protein belongs to the glycosyl hydrolase 18 family. Prismatic layer of shell (at protein level). Expressed primarily in the mantle with highest level in the mantle edge and lower level in the mantle pallium.

The protein localises to the secreted. It carries out the reaction Random endo-hydrolysis of N-acetyl-beta-D-glucosaminide (1-&gt;4)-beta-linkages in chitin and chitodextrins.. The polypeptide is Putative chitinase 2 (Margaritifera margaritifera (Freshwater pearl mussel)).